The primary structure comprises 365 residues: Sulfate/thiosulfate import ATP-binding protein CysA (365 aa).

Residues 3 to 237 enclose the ABC transporter domain; that stretch reads IEIANIKKSF…PATRFVLEFM (235 aa). ATP is bound at residue 35–42; the sequence is GPSGSGKT.

This sequence belongs to the ABC transporter superfamily. Sulfate/tungstate importer (TC 3.A.1.6) family. As to quaternary structure, the complex is composed of two ATP-binding proteins (CysA), two transmembrane proteins (CysT and CysW) and a solute-binding protein (CysP).

It is found in the cell inner membrane. It catalyses the reaction sulfate(out) + ATP + H2O = sulfate(in) + ADP + phosphate + H(+). It carries out the reaction thiosulfate(out) + ATP + H2O = thiosulfate(in) + ADP + phosphate + H(+). Its function is as follows. Part of the ABC transporter complex CysAWTP involved in sulfate/thiosulfate import. Responsible for energy coupling to the transport system. In Shigella flexneri, this protein is Sulfate/thiosulfate import ATP-binding protein CysA.